The chain runs to 1393 residues: DNA-directed RNA polymerase subunit beta'' (1393 aa).

Residues Cys-220, Cys-291, Cys-298, and Cys-301 each contribute to the Zn(2+) site.

This sequence belongs to the RNA polymerase beta' chain family. RpoC2 subfamily. In terms of assembly, in plastids the minimal PEP RNA polymerase catalytic core is composed of four subunits: alpha, beta, beta', and beta''. When a (nuclear-encoded) sigma factor is associated with the core the holoenzyme is formed, which can initiate transcription. Zn(2+) serves as cofactor.

Its subcellular location is the plastid. The protein resides in the chloroplast. The enzyme catalyses RNA(n) + a ribonucleoside 5'-triphosphate = RNA(n+1) + diphosphate. Its function is as follows. DNA-dependent RNA polymerase catalyzes the transcription of DNA into RNA using the four ribonucleoside triphosphates as substrates. The sequence is that of DNA-directed RNA polymerase subunit beta'' from Gossypium hirsutum (Upland cotton).